The chain runs to 301 residues: Transposase InsD for insertion element IS2D (301 aa).

The Integrase catalytic domain occupies 106–289 (KPAVPPSKRA…SPREYLRQRA (184 aa)).

Involved in the transposition of the insertion sequence IS2. The polypeptide is Transposase InsD for insertion element IS2D (insD2) (Escherichia coli (strain K12)).